Reading from the N-terminus, the 498-residue chain is COP9 signalosome complex subunit 1 (498 aa).

In terms of domain architecture, PCI spans 249–430; sequence SYLEAANSFI…HVLVSTQGDK (182 aa).

Belongs to the CSN1 family. As to quaternary structure, component of the COP9 signalosome (CSN) complex.

The protein resides in the cytoplasm. It is found in the nucleus. Functionally, component of the COP9 signalosome (CSN) complex that acts as an regulator of the ubiquitin (Ubl) conjugation pathway by mediating the deneddylation of the cullin subunit of SCF-type E3 ubiquitin-protein ligase complexes. The CSN complex seems to link protein degradation to sexual development. Required for fruit body formation. This chain is COP9 signalosome complex subunit 1 (csnA), found in Emericella nidulans (strain FGSC A4 / ATCC 38163 / CBS 112.46 / NRRL 194 / M139) (Aspergillus nidulans).